The chain runs to 267 residues: Tetrahydromethanopterin S-methyltransferase subunit C (267 aa).

7 helical membrane-spanning segments follow: residues Ile-19–Ala-39, Gln-40–Val-60, Ile-75–Gly-95, Ile-96–Leu-116, Ala-131–Ala-151, Tyr-162–His-182, and Gly-221–Met-241.

The protein belongs to the MtrC family. As to quaternary structure, the complex is composed of 8 subunits; MtrA, MtrB, MtrC, MtrD, MtrE, MtrF, MtrG and MtrH.

It localises to the cell membrane. It carries out the reaction 5-methyl-5,6,7,8-tetrahydromethanopterin + coenzyme M + 2 Na(+)(in) = 5,6,7,8-tetrahydromethanopterin + methyl-coenzyme M + 2 Na(+)(out). It functions in the pathway one-carbon metabolism; methanogenesis from CO(2); methyl-coenzyme M from 5,10-methylene-5,6,7,8-tetrahydromethanopterin: step 2/2. Functionally, part of a complex that catalyzes the formation of methyl-coenzyme M and tetrahydromethanopterin from coenzyme M and methyl-tetrahydromethanopterin. This is an energy-conserving, sodium-ion translocating step. This chain is Tetrahydromethanopterin S-methyltransferase subunit C, found in Methanosarcina acetivorans (strain ATCC 35395 / DSM 2834 / JCM 12185 / C2A).